The following is a 148-amino-acid chain: Flavodoxin (148 aa).

A Flavodoxin-like domain is found at 4–145 (ALIVYGSTTG…DIVGWAHDVR (142 aa)).

It belongs to the flavodoxin family. It depends on FMN as a cofactor.

Functionally, low-potential electron donor to a number of redox enzymes. The protein is Flavodoxin of Nitratidesulfovibrio vulgaris (strain ATCC 29579 / DSM 644 / CCUG 34227 / NCIMB 8303 / VKM B-1760 / Hildenborough) (Desulfovibrio vulgaris).